Consider the following 405-residue polypeptide: Sesquiterpene synthase 16 (405 aa).

Positions 155, 159, and 309 each coordinate Mg(2+). The DDXXD motif signature appears at 155–159 (DDTYD).

The protein belongs to the terpene synthase family. Tpsa subfamily. Requires Mg(2+) as cofactor. The cofactor is Mn(2+).

The protein operates within secondary metabolite biosynthesis; terpenoid biosynthesis. Sesquiterpene synthase involved in the biosynthesis of volatile compounds. No activity detected with geranyl diphosphate (GPP) and farnesyl diphosphate (FPP) as substrates. This is Sesquiterpene synthase 16 from Solanum habrochaites (Wild tomato).